The sequence spans 251 residues: CDP-diacylglycerol pyrophosphatase (251 aa).

Residues G5–F25 traverse the membrane as a helical segment.

It belongs to the Cdh family.

The protein resides in the cell inner membrane. The enzyme catalyses a CDP-1,2-diacyl-sn-glycerol + H2O = a 1,2-diacyl-sn-glycero-3-phosphate + CMP + 2 H(+). The protein operates within phospholipid metabolism; CDP-diacylglycerol degradation; phosphatidate from CDP-diacylglycerol: step 1/1. The chain is CDP-diacylglycerol pyrophosphatase from Salmonella enteritidis PT4 (strain P125109).